We begin with the raw amino-acid sequence, 58 residues long: Bestoxin (58 aa).

Residues 3-58 enclose the LCN-type CS-alpha/beta domain; sequence VPGNYPLDKDGNTYTCLELGENKDCQKVCKLHGVQYGYCYAFSCWCKEYLDDKDSV. 3 cysteine pairs are disulfide-bonded: C18–C41, C27–C46, and C31–C48.

As to expression, expressed by the venom gland.

The protein resides in the secreted. Beta toxins bind voltage-independently at site-4 of sodium channels (Nav) and shift the voltage of activation toward more negative potentials thereby affecting sodium channel activation and promoting spontaneous and repetitive firing. In mice, causes intense writhing. This Parabuthus transvaalicus (Transvaal thick-tailed scorpion) protein is Bestoxin.